Reading from the N-terminus, the 200-residue chain is LexA repressor (200 aa).

Catalysis depends on for autocatalytic cleavage activity residues Ser-121 and Lys-158.

Belongs to the peptidase S24 family. As to quaternary structure, homodimer.

It carries out the reaction Hydrolysis of Ala-|-Gly bond in repressor LexA.. Its function is as follows. Binds a consensus sequence 5'-TGTTC-N(4)-GAACA-3'; some genes have a tandem consensus sequence and their binding is cooperative. Binds to the promoters of a number of genes, including lexA and splB. Represses a number of genes involved in the response to DNA damage (SOS response). The polypeptide is LexA repressor (Opitutus terrae (strain DSM 11246 / JCM 15787 / PB90-1)).